A 105-amino-acid polypeptide reads, in one-letter code: Large ribosomal subunit protein uL24 (105 aa).

It belongs to the universal ribosomal protein uL24 family. Part of the 50S ribosomal subunit.

Its function is as follows. One of two assembly initiator proteins, it binds directly to the 5'-end of the 23S rRNA, where it nucleates assembly of the 50S subunit. One of the proteins that surrounds the polypeptide exit tunnel on the outside of the subunit. The sequence is that of Large ribosomal subunit protein uL24 from Aeromonas hydrophila subsp. hydrophila (strain ATCC 7966 / DSM 30187 / BCRC 13018 / CCUG 14551 / JCM 1027 / KCTC 2358 / NCIMB 9240 / NCTC 8049).